Consider the following 483-residue polypeptide: MVRIPRRKLLPSCLCMTATVFLMVTVQVLVELGKFERKKFKNSDLQDGQKDVEGDPKHLNPLPKKDALALSGRNKVDAGSYPIVLWWSPLTGETGRLGQCGADACFFTINRTFQHHPMTKAFLFYGTDFNIDSLPLPRKAHHDWALFHEESPKNNYKLFHKPVITLFNHTATFSRHSDLPLTTQYLESVEVLKSLRYLVPLQSKNNLRQKLAPLVYVQSDCDPPSDRDSYVRELMAYIEVDSYGECLQNKHLPQQLKNPASMDADAFYRVLAQYKFILAFENAVCDDYITEKFWRPLKLGVVPVYYGSPTIADWLPSNRSAILVSEFSHPRELASFIRRLDYDDGLYETYVEWKLKGEISNQRLLTALREREWGVQDINQDNYIDTFECMVCRRVWANRRLQEQGLPPKQWKADVSHLHCPEPTLFAFSSPASPALRGRSLRELWLPSFQQSKKEAQALRWLVDRNQNFSSEEFWALVFKDSF.

Residues 1–8 (MVRIPRRK) lie on the Cytoplasmic side of the membrane. Residues 9 to 31 (LLPSCLCMTATVFLMVTVQVLVE) form a helical; Signal-anchor for type II membrane protein membrane-spanning segment. The Lumenal segment spans residues 32-483 (LGKFERKKFK…FWALVFKDSF (452 aa)). The tract at residues 45 to 64 (LQDGQKDVEGDPKHLNPLPK) is disordered. 3 N-linked (GlcNAc...) asparagine glycosylation sites follow: N110, N168, and N318. Cysteines 389 and 392 form a disulfide. N468 carries N-linked (GlcNAc...) asparagine glycosylation.

This sequence belongs to the glycosyltransferase 10 family.

The protein localises to the endoplasmic reticulum membrane. The catalysed reaction is L-threonyl-[protein] + GDP-beta-L-fucose = 3-O-(alpha-L-fucosyl)-L-threonyl-[protein] + GDP + H(+). It catalyses the reaction L-seryl-[protein] + GDP-beta-L-fucose = 3-O-(alpha-L-fucosyl)-L-seryl-[protein] + GDP + H(+). The protein operates within protein modification; protein glycosylation. In terms of biological role, protein O-fucosyltransferase that specifically catalyzes O-fucosylation of serine or threonine residues in EMI domains of target proteins, such as MMRN1, MMRN2 and EMID1. Attaches fucose through an O-glycosidic linkage. O-fucosylation of EMI domain-containing proteins may be required for facilitating protein folding and secretion. May also show alpha-(1,3)-fucosyltransferase activity toward the innermost N-acetyl glucosamine (GlcNAc) residue in biantennary N-glycan acceptors. However, this was tested with a library of synthetic substrates and this activity is unsure in vivo. May be involved in biosynthesis of Lewis X-carrying biantennary N-glycans that regulate neuron stem cell self-renewal during brain development. This chain is GDP-fucose protein O-fucosyltransferase 3 (Fut10), found in Rattus norvegicus (Rat).